The primary structure comprises 91 residues: UPF0250 protein PputW619_0619 (91 aa).

Belongs to the UPF0250 family.

This is UPF0250 protein PputW619_0619 from Pseudomonas putida (strain W619).